The following is a 111-amino-acid chain: Universal stress protein B (111 aa).

The next 2 helical transmembrane spans lie at 1–21 (MISTVALFWALFLVCVINMAR) and 90–110 (FILTSALCGLVIISLIGLMIW).

It belongs to the universal stress protein B family.

Its subcellular location is the cell inner membrane. This chain is Universal stress protein B, found in Cronobacter sakazakii (strain ATCC BAA-894) (Enterobacter sakazakii).